The following is a 299-amino-acid chain: Acetylglutamate kinase (299 aa).

Residues 68–69 (GG), Arg-90, and Asn-194 contribute to the substrate site.

Belongs to the acetylglutamate kinase family. ArgB subfamily.

It is found in the cytoplasm. It catalyses the reaction N-acetyl-L-glutamate + ATP = N-acetyl-L-glutamyl 5-phosphate + ADP. It functions in the pathway amino-acid biosynthesis; L-arginine biosynthesis; N(2)-acetyl-L-ornithine from L-glutamate: step 2/4. Catalyzes the ATP-dependent phosphorylation of N-acetyl-L-glutamate. The polypeptide is Acetylglutamate kinase (Psychrobacter cryohalolentis (strain ATCC BAA-1226 / DSM 17306 / VKM B-2378 / K5)).